Reading from the N-terminus, the 73-residue chain is Putative beta-defensin 108A (73 aa).

A signal peptide spans 1 to 22 (MRIAVLFFTIFFFMSQVLPAKG). Intrachain disulfides connect C28–C55, C35–C49, and C39–C56.

Belongs to the beta-defensin family.

It localises to the secreted. Its function is as follows. Has antibacterial activity. This chain is Putative beta-defensin 108A, found in Homo sapiens (Human).